The chain runs to 129 residues: Small ribosomal subunit protein uS11 (129 aa).

It belongs to the universal ribosomal protein uS11 family. In terms of assembly, part of the 30S ribosomal subunit. Interacts with proteins S7 and S18. Binds to IF-3.

In terms of biological role, located on the platform of the 30S subunit, it bridges several disparate RNA helices of the 16S rRNA. Forms part of the Shine-Dalgarno cleft in the 70S ribosome. The protein is Small ribosomal subunit protein uS11 of Psychrobacter arcticus (strain DSM 17307 / VKM B-2377 / 273-4).